A 220-amino-acid polypeptide reads, in one-letter code: Type II restriction enzyme NspV (220 aa).

It catalyses the reaction Endonucleolytic cleavage of DNA to give specific double-stranded fragments with terminal 5'-phosphates.. In terms of biological role, a P subtype restriction enzyme that recognizes the double-stranded sequence 5'-TTCGAA-3' and cleaves after T-2. This Nostoc sp. (strain ATCC 29411 / PCC 7524) protein is Type II restriction enzyme NspV.